The primary structure comprises 199 residues: 3-isopropylmalate dehydratase small subunit (199 aa).

This sequence belongs to the LeuD family. LeuD type 1 subfamily. As to quaternary structure, heterodimer of LeuC and LeuD.

It catalyses the reaction (2R,3S)-3-isopropylmalate = (2S)-2-isopropylmalate. The protein operates within amino-acid biosynthesis; L-leucine biosynthesis; L-leucine from 3-methyl-2-oxobutanoate: step 2/4. Functionally, catalyzes the isomerization between 2-isopropylmalate and 3-isopropylmalate, via the formation of 2-isopropylmaleate. This Bacillus pumilus (strain SAFR-032) protein is 3-isopropylmalate dehydratase small subunit.